The following is a 321-amino-acid chain: Glucokinase (321 aa).

8 to 13 (GDVGGT) contributes to the ATP binding site.

It belongs to the bacterial glucokinase family.

It localises to the cytoplasm. It catalyses the reaction D-glucose + ATP = D-glucose 6-phosphate + ADP + H(+). The sequence is that of Glucokinase from Escherichia coli (strain SMS-3-5 / SECEC).